The sequence spans 1760 residues: Chitin synthase csmB (1760 aa).

Low complexity predominate over residues 1-17 (MSNRFSVYSSHSTGVSS). Residues 1-23 (MSNRFSVYSSHSTGVSSARPSAP) are disordered. Residues 1–374 (MSNRFSVYSS…TVSITVVDIP (374 aa)) enclose the Myosin motor domain. The N-linked (GlcNAc...) asparagine glycan is linked to N275. The interval 344 to 363 (LDNDPSTSGGSGPGGQWTDD) is disordered. A region of interest (actin-binding) is located at residue P374. A run of 2 helical transmembrane segments spans residues 731–751 (IWVG…LRWI) and 767–787 (LVLM…IIAF). N-linked (GlcNAc...) asparagine glycans are attached at residues N878, N906, and N995. A helical transmembrane segment spans residues 1029–1049 (ILLSFTVLICAVILVKFVSAL). N-linked (GlcNAc...) asparagine glycosylation occurs at N1394. Helical transmembrane passes span 1419 to 1439 (FVVL…VYLG), 1452 to 1472 (FPMI…IIFL), and 1480 to 1500 (IGWM…LPLY). Residues N1584 and N1652 are each glycosylated (N-linked (GlcNAc...) asparagine). Residues 1702–1758 (GPDEGAITEAIRACLAEVDLDTVTKKQVRALVEQRLQTTLMGDKRTFLDRQIDHELA) enclose the DEK-C domain.

It in the N-terminal section; belongs to the TRAFAC class myosin-kinesin ATPase superfamily. Myosin family. In the C-terminal section; belongs to the chitin synthase family. Class V subfamily.

The protein resides in the cell membrane. Its subcellular location is the cell septum. It is found in the cell tip. It carries out the reaction [(1-&gt;4)-N-acetyl-beta-D-glucosaminyl](n) + UDP-N-acetyl-alpha-D-glucosamine = [(1-&gt;4)-N-acetyl-beta-D-glucosaminyl](n+1) + UDP + H(+). Polymerizes chitin, a structural polymer of the cell wall and septum, by transferring the sugar moiety of UDP-GlcNAc to the non-reducing end of the growing chitin polymer. Plays an important role in septal growth or maintenance. Mediates colony spore formation. The polypeptide is Chitin synthase csmB (Aspergillus niger (strain ATCC MYA-4892 / CBS 513.88 / FGSC A1513)).